The chain runs to 853 residues: Trimethylguanosine synthase (853 aa).

Positions Asn-54 to Asp-84 are disordered. Thr-61 carries the post-translational modification Phosphothreonine. Residues Ser-69 to Glu-80 are compositionally biased toward polar residues. Phosphoserine occurs at positions 81, 85, 92, and 139. Tyr-144 is modified (phosphotyrosine). The residue at position 152 (Ser-152) is a Phosphoserine. Disordered stretches follow at residues Val-328 to Gly-437 and Glu-523 to Ser-549. Positions Lys-365 to Gln-383 are enriched in basic and acidic residues. Ser-405 and Ser-431 each carry phosphoserine. A compositionally biased stretch (acidic residues) spans Asp-424–Asp-435. Positions Gln-526–Ser-541 are enriched in polar residues. Phosphoserine is present on Ser-572. The tract at residues Cys-594–Ile-623 is disordered. Residues Lys-612–Lys-621 are compositionally biased toward basic residues. S-adenosyl-L-methionine is bound at residue Asp-711.

Belongs to the methyltransferase superfamily. Trimethylguanosine synthase family. In terms of assembly, may form homooligomers. Interacts with CREBBP/CBP, EED/WAIT1, EP300/P300, NCOA6/PRIP, PPARBP/PBP and SMN. Ubiquitously expressed.

It localises to the cytoplasm. Its subcellular location is the nucleus. The protein localises to the cajal body. The protein resides in the nucleolus. It carries out the reaction a 5'-end (N(7)-methyl 5'-triphosphoguanosine)-ribonucleoside in snRNA + S-adenosyl-L-methionine = a 5'-end (N(2),N(7)-dimethyl 5'-triphosphoguanosine)-ribonucleoside in snRNA + S-adenosyl-L-homocysteine + H(+). It catalyses the reaction a 5'-end (N(7)-methyl 5'-triphosphoguanosine)-ribonucleoside in snoRNA + S-adenosyl-L-methionine = a 5'-end (N(2),N(7)-dimethyl 5'-triphosphoguanosine)-ribonucleoside in snoRNA + S-adenosyl-L-homocysteine + H(+). The catalysed reaction is a 5'-end (N(2),N(7)-dimethyl 5'-triphosphoguanosine)-ribonucleoside in snRNA + S-adenosyl-L-methionine = a 5'-end (N(2),N(2),N(7)-trimethyl 5'-triphosphoguanosine)-ribonucleoside in snRNA + S-adenosyl-L-homocysteine + H(+). The enzyme catalyses a 5'-end (N(2),N(7)-dimethyl 5'-triphosphoguanosine)-ribonucleoside in snoRNA + S-adenosyl-L-methionine = a 5'-end (N(2),N(2),N(7)-trimethyl 5'-triphosphoguanosine)-ribonucleoside in snoRNA + S-adenosyl-L-homocysteine + H(+). Catalyzes the 2 serial methylation steps for the conversion of the 7-monomethylguanosine (m(7)G) caps of snRNAs and snoRNAs to a 2,2,7-trimethylguanosine (m(2,2,7)G) cap structure. The enzyme is specific for guanine, and N7 methylation must precede N2 methylation. Hypermethylation of the m7G cap of U snRNAs leads to their concentration in nuclear foci, their colocalization with coilin and the formation of canonical Cajal bodies (CBs). Plays a role in transcriptional regulation. This chain is Trimethylguanosine synthase (Tgs1), found in Mus musculus (Mouse).